Consider the following 194-residue polypeptide: MEVILLERIENLGFMGDIVKVKDGYARNFLLPQKKALRKSKSNLEYFNAQKVELEALNLKRKGEAEAVAVKLDGLNLVMVRQAGESGQLYGSVSARDITDSLKAEGFVIARSQVLLNHPIKDLGRYETRVSLHPEVIVTITVVVARSEAEAQASAAAAAALLERPEDAEEAVANEEEAEAALLDDEDADEYEQG.

The interval 165–194 (PEDAEEAVANEEEAEAALLDDEDADEYEQG) is disordered. Residues 166-194 (EDAEEAVANEEEAEAALLDDEDADEYEQG) show a composition bias toward acidic residues.

This sequence belongs to the bacterial ribosomal protein bL9 family.

Its function is as follows. Binds to the 23S rRNA. This Rhodospirillum rubrum (strain ATCC 11170 / ATH 1.1.1 / DSM 467 / LMG 4362 / NCIMB 8255 / S1) protein is Large ribosomal subunit protein bL9.